The chain runs to 397 residues: Phosphoglycerate kinase (397 aa).

Residues 26–28 (DLN), Arg-42, 65–68 (HLGR), Arg-119, and Arg-152 contribute to the substrate site. Residues Lys-203, Glu-325, and 351 to 354 (GGDT) each bind ATP.

The protein belongs to the phosphoglycerate kinase family. Monomer.

Its subcellular location is the cytoplasm. The enzyme catalyses (2R)-3-phosphoglycerate + ATP = (2R)-3-phospho-glyceroyl phosphate + ADP. It participates in carbohydrate degradation; glycolysis; pyruvate from D-glyceraldehyde 3-phosphate: step 2/5. This Bordetella bronchiseptica (strain ATCC BAA-588 / NCTC 13252 / RB50) (Alcaligenes bronchisepticus) protein is Phosphoglycerate kinase.